The primary structure comprises 229 residues: Ribonuclease 3 (229 aa).

One can recognise an RNase III domain in the interval 4–133 (WEELQESVGF…FIGALYLDNG (130 aa)). A Mg(2+)-binding site is contributed by Glu-46. Asp-50 is an active-site residue. Asp-119 and Glu-122 together coordinate Mg(2+). Glu-122 is a catalytic residue. The DRBM domain occupies 159–228 (DYKTQLQEIV…AQFAINKLIH (70 aa)).

The protein belongs to the ribonuclease III family. Homodimer. Requires Mg(2+) as cofactor.

It localises to the cytoplasm. The catalysed reaction is Endonucleolytic cleavage to 5'-phosphomonoester.. Functionally, digests double-stranded RNA. Involved in the processing of primary rRNA transcript to yield the immediate precursors to the large and small rRNAs (23S and 16S). Processes some mRNAs, and tRNAs when they are encoded in the rRNA operon. Processes pre-crRNA and tracrRNA of type II CRISPR loci if present in the organism. In Listeria monocytogenes serovar 1/2a (strain ATCC BAA-679 / EGD-e), this protein is Ribonuclease 3.